We begin with the raw amino-acid sequence, 376 residues long: N-acetyldiaminopimelate deacetylase (376 aa).

Asp69 is an active-site residue. Catalysis depends on Glu128, which acts as the Proton acceptor.

Belongs to the peptidase M20A family. N-acetyldiaminopimelate deacetylase subfamily.

The catalysed reaction is N-acetyl-(2S,6S)-2,6-diaminopimelate + H2O = (2S,6S)-2,6-diaminopimelate + acetate. Its pathway is amino-acid biosynthesis; L-lysine biosynthesis via DAP pathway; LL-2,6-diaminopimelate from (S)-tetrahydrodipicolinate (acetylase route): step 3/3. Its function is as follows. Catalyzes the conversion of N-acetyl-diaminopimelate to diaminopimelate and acetate. In Streptococcus pneumoniae (strain JJA), this protein is N-acetyldiaminopimelate deacetylase.